The primary structure comprises 364 residues: UDP-N-acetylglucosamine--N-acetylmuramyl-(pentapeptide) pyrophosphoryl-undecaprenol N-acetylglucosamine transferase (364 aa).

Residues T15–G17, N123, R164, S191, and Q286 each bind UDP-N-acetyl-alpha-D-glucosamine.

This sequence belongs to the glycosyltransferase 28 family. MurG subfamily.

It is found in the cell inner membrane. The enzyme catalyses di-trans,octa-cis-undecaprenyl diphospho-N-acetyl-alpha-D-muramoyl-L-alanyl-D-glutamyl-meso-2,6-diaminopimeloyl-D-alanyl-D-alanine + UDP-N-acetyl-alpha-D-glucosamine = di-trans,octa-cis-undecaprenyl diphospho-[N-acetyl-alpha-D-glucosaminyl-(1-&gt;4)]-N-acetyl-alpha-D-muramoyl-L-alanyl-D-glutamyl-meso-2,6-diaminopimeloyl-D-alanyl-D-alanine + UDP + H(+). The protein operates within cell wall biogenesis; peptidoglycan biosynthesis. Functionally, cell wall formation. Catalyzes the transfer of a GlcNAc subunit on undecaprenyl-pyrophosphoryl-MurNAc-pentapeptide (lipid intermediate I) to form undecaprenyl-pyrophosphoryl-MurNAc-(pentapeptide)GlcNAc (lipid intermediate II). The protein is UDP-N-acetylglucosamine--N-acetylmuramyl-(pentapeptide) pyrophosphoryl-undecaprenol N-acetylglucosamine transferase of Prochlorococcus marinus subsp. pastoris (strain CCMP1986 / NIES-2087 / MED4).